The following is a 356-amino-acid chain: Phosphoribosylformylglycinamidine cyclo-ligase (356 aa).

It belongs to the AIR synthase family.

It localises to the cytoplasm. It carries out the reaction 2-formamido-N(1)-(5-O-phospho-beta-D-ribosyl)acetamidine + ATP = 5-amino-1-(5-phospho-beta-D-ribosyl)imidazole + ADP + phosphate + H(+). It participates in purine metabolism; IMP biosynthesis via de novo pathway; 5-amino-1-(5-phospho-D-ribosyl)imidazole from N(2)-formyl-N(1)-(5-phospho-D-ribosyl)glycinamide: step 2/2. In Acinetobacter baylyi (strain ATCC 33305 / BD413 / ADP1), this protein is Phosphoribosylformylglycinamidine cyclo-ligase.